We begin with the raw amino-acid sequence, 601 residues long: ATP-dependent lipid A-core flippase (601 aa).

6 helical membrane passes run 35–55 (FAVA…LAFL), 77–97 (LAII…AILM), 150–170 (AVTS…VIFY), 173–193 (WQLA…IAKF), 263–283 (MEFL…YQVI), and 286–306 (SSTP…YEPV). In terms of domain architecture, ABC transmembrane type-1 spans 36 to 318 (AVAMVCMLIA…LTNVNNTIQQ (283 aa)). Residues 352–585 (IEIRNISFAY…RGEYYKLHQL (234 aa)) form the ABC transporter domain. An ATP-binding site is contributed by 384–391 (GMSGGGKT).

It belongs to the ABC transporter superfamily. Lipid exporter (TC 3.A.1.106) family. As to quaternary structure, homodimer.

It is found in the cell inner membrane. It catalyses the reaction ATP + H2O + lipid A-core oligosaccharideSide 1 = ADP + phosphate + lipid A-core oligosaccharideSide 2.. In terms of biological role, involved in lipopolysaccharide (LPS) biosynthesis. Translocates lipid A-core from the inner to the outer leaflet of the inner membrane. Transmembrane domains (TMD) form a pore in the inner membrane and the ATP-binding domain (NBD) is responsible for energy generation. This Syntrophus aciditrophicus (strain SB) protein is ATP-dependent lipid A-core flippase.